Here is a 289-residue protein sequence, read N- to C-terminus: Aquaporin-2 (289 aa).

The tract at residues 1–36 (MSNESNDLEKNISHLDPTGVDNAYIPPEQPETKHSR) is disordered. Over 1 to 47 (MSNESNDLEKNISHLDPTGVDNAYIPPEQPETKHSRFNIDRDTLRNH) the chain is Cytoplasmic. Residues 48–68 (FIAAVGEFCGTFMFLWCAYVI) form a helical membrane-spanning segment. Over 69-90 (CNVANHDVALTTEPEGSHPGQL) the chain is Extracellular. The helical transmembrane segment at 91–111 (IMIALGFGFSVMFSIWCFAGV) threads the bilayer. Topologically, residues 112–135 (SGGALNPAVSLSLCLARAISPARC) are cytoplasmic. Positions 117–119 (NPA) match the NPA 1 motif. Residues 136–156 (VVMWFPQIIAGMAAGGAASAM) form a helical membrane-spanning segment. Topologically, residues 157-175 (TPGKVLFTNALGLGCSRSR) are extracellular. The helical transmembrane segment at 176 to 196 (GLFLEMFGTAVLCLTVLMTAV) threads the bilayer. At 197 to 202 (EKRETN) the chain is on the cytoplasmic side. A helical transmembrane segment spans residues 203-223 (FMAALPIGISLFMAHMALTGY). Residues 224-247 (TGTGVNPARSLGAAVAARYFPHYH) are Extracellular-facing. Positions 229-231 (NPA) match the NPA 2 motif. A helical membrane pass occupies residues 248 to 268 (WIYWIGPLLGAFLAWSVWQLL). The Cytoplasmic segment spans residues 269–289 (QILDYTTYVNAEKAAGQKKED).

The protein belongs to the MIP/aquaporin (TC 1.A.8) family.

The protein resides in the endoplasmic reticulum membrane. The protein localises to the cell membrane. In terms of biological role, water channel required to facilitate the transport of water across membranes. Involved in freeze tolerance, osmotolerance and cell flocculation in liquid cultures. Is non-functional in most laboratory strains. The polypeptide is Aquaporin-2 (AQY2) (Saccharomyces cerevisiae (Baker's yeast)).